The following is a 446-amino-acid chain: D(1A) dopamine receptor (446 aa).

The Extracellular portion of the chain corresponds to 1 to 23 (MRTLNTSTMDGTGLVVERDFSFR). Asn-5 carries N-linked (GlcNAc...) asparagine glycosylation. The helical transmembrane segment at 24-49 (ILTACFLSLLILSTLLGNTLVCAAVI) threads the bilayer. Over 50–60 (RFRHLRSKVTN) the chain is Cytoplasmic. The helical transmembrane segment at 61-87 (FFVISLAVSDLLVAVLVMPWKAVAEIA) threads the bilayer. At 88-96 (GFWPFGSFC) the chain is on the extracellular side. Residues Cys-96 and Cys-186 are joined by a disulfide bond. The helical transmembrane segment at 97 to 119 (NIWVAFDIMCSTASILNLCVISV) threads the bilayer. Residues 120-138 (DRYWAISSPFRYERKMTPK) are Cytoplasmic-facing. The helical transmembrane segment at 139–163 (AAFILISVAWTLSVLISFIPVQLSW) threads the bilayer. Topologically, residues 164–192 (HKAKPTSPSDGNVTSLGKTTHNCDSSLSR) are extracellular. Residues 193 to 218 (TYAISSSLISFYIPVAIMIVTYTRIY) form a helical membrane-spanning segment. Topologically, residues 219 to 272 (RIAQKQIRRISALERAAVHAKNCQTTAGNGNPAECSQPESSFKMSFKRETKVLK) are cytoplasmic. A helical membrane pass occupies residues 273–299 (TLSVIMGVFVCCWLPFFILNCMVPFCG). Topologically, residues 300–312 (SGETKPFCIDSIT) are extracellular. The helical transmembrane segment at 313-337 (FDVFVWFGWANSSLNPIIYAFNADF) threads the bilayer. The Cytoplasmic portion of the chain corresponds to 338 to 446 (RKAFSTLLGC…PITQNGQHPT (109 aa)). 2 S-palmitoyl cysteine lipidation sites follow: Cys-347 and Cys-351.

Belongs to the G-protein coupled receptor 1 family. As to quaternary structure, interacts with DNAJC14 via its C-terminus. Interacts with DRD2. Interacts with DORIP1.

It localises to the cell membrane. Its subcellular location is the endoplasmic reticulum membrane. It is found in the cell projection. The protein localises to the cilium membrane. The protein resides in the dendrite. It localises to the dendritic spine. In terms of biological role, dopamine receptor whose activity is mediated by G proteins which activate adenylyl cyclase. This is D(1A) dopamine receptor (DRD1) from Sus scrofa (Pig).